The following is a 1894-amino-acid chain: Plexin-A4 (1894 aa).

A signal peptide spans 1 to 23 (MKAMPWNWTCLLSHLLMVGMGSS). The Sema domain occupies 24–507 (TLLTRQPAPL…SERQLTRVPV (484 aa)). At 24 to 1237 (TLLTRQPAPL…IAPDSPLSLP (1214 aa)) the chain is on the extracellular side. Cystine bridges form between C95/C104, C130/C138, C284/C405, C300/C356, C374/C393, C510/C527, C516/C558, C519/C536, C530/C542, and C593/C612. One can recognise a PSI 1 domain in the interval 509–559 (SCGQYQSCGECLGSGDPHCGWCVLHNTCTRKERCERSKEPRRFASEMKQCV). N-linked (GlcNAc...) asparagine glycosylation occurs at N655. 2 consecutive PSI domains span residues 655–702 (NCSV…EDCP) and 803–856 (KCGA…SKCT). 4 IPT/TIG domains span residues 858 to 952 (PRIT…YYFM), 954 to 1037 (LTLS…FQYV), 1040 to 1139 (PTIV…FTYY), and 1142 to 1230 (PVFE…YIAP). 3 N-linked (GlcNAc...) asparagine glycosylation sites follow: N1007, N1132, and N1180. Residues 1238 to 1258 (AIVSIAVAGGLLIIFIVAVLI) traverse the membrane as a helical segment. Topologically, residues 1259 to 1894 (AYKRKSRESD…QVITLMSLDS (636 aa)) are cytoplasmic. K1350 is subject to N6-acetyllysine.

The protein belongs to the plexin family. As to quaternary structure, interacts with NRP1 and NRP2.

Its subcellular location is the cell membrane. Its function is as follows. Coreceptor for SEMA3A. Necessary for signaling by class 3 semaphorins and subsequent remodeling of the cytoskeleton. Plays a role in axon guidance in the developing nervous system. Class 3 semaphorins bind to a complex composed of a neuropilin and a plexin. The plexin modulates the affinity of the complex for specific semaphorins, and its cytoplasmic domain is required for the activation of down-stream signaling events in the cytoplasm. The protein is Plexin-A4 (PLXNA4) of Homo sapiens (Human).